We begin with the raw amino-acid sequence, 91 residues long: Large ribosomal subunit protein bL27 (91 aa).

This sequence belongs to the bacterial ribosomal protein bL27 family.

This chain is Large ribosomal subunit protein bL27, found in Pseudomonas savastanoi pv. phaseolicola (strain 1448A / Race 6) (Pseudomonas syringae pv. phaseolicola (strain 1448A / Race 6)).